A 128-amino-acid polypeptide reads, in one-letter code: Glycine cleavage system H protein (128 aa).

The Lipoyl-binding domain occupies 24-106 (SVTVGITAHA…YGDGWFFKIK (83 aa)). Lys-65 carries the N6-lipoyllysine modification.

This sequence belongs to the GcvH family. In terms of assembly, the glycine cleavage system is composed of four proteins: P, T, L and H. Requires (R)-lipoate as cofactor.

The glycine cleavage system catalyzes the degradation of glycine. The H protein shuttles the methylamine group of glycine from the P protein to the T protein. The chain is Glycine cleavage system H protein from Chromobacterium violaceum (strain ATCC 12472 / DSM 30191 / JCM 1249 / CCUG 213 / NBRC 12614 / NCIMB 9131 / NCTC 9757 / MK).